The primary structure comprises 215 residues: UPF0502 protein YceH (215 aa).

Position 80 is an N6-acetyllysine (Lys-80).

Belongs to the UPF0502 family.

The sequence is that of UPF0502 protein YceH from Escherichia coli O81 (strain ED1a).